A 174-amino-acid chain; its full sequence is Large ribosomal subunit protein uL10 (174 aa).

This sequence belongs to the universal ribosomal protein uL10 family. In terms of assembly, part of the ribosomal stalk of the 50S ribosomal subunit. The N-terminus interacts with L11 and the large rRNA to form the base of the stalk. The C-terminus forms an elongated spine to which L12 dimers bind in a sequential fashion forming a multimeric L10(L12)X complex.

Its function is as follows. Forms part of the ribosomal stalk, playing a central role in the interaction of the ribosome with GTP-bound translation factors. The sequence is that of Large ribosomal subunit protein uL10 from Nitrosospira multiformis (strain ATCC 25196 / NCIMB 11849 / C 71).